A 62-amino-acid chain; its full sequence is DNA gyrase inhibitor YacG (62 aa).

Zn(2+) is bound by residues Cys9, Cys12, Cys27, and Cys31. A compositionally biased stretch (basic and acidic residues) spans Gly43–Pro52. The disordered stretch occupies residues Gly43–Glu62.

The protein belongs to the DNA gyrase inhibitor YacG family. Interacts with GyrB. Zn(2+) serves as cofactor.

Its function is as follows. Inhibits all the catalytic activities of DNA gyrase by preventing its interaction with DNA. Acts by binding directly to the C-terminal domain of GyrB, which probably disrupts DNA binding by the gyrase. The polypeptide is DNA gyrase inhibitor YacG (Geobacter sp. (strain M21)).